A 204-amino-acid polypeptide reads, in one-letter code: Methyl-CpG-binding domain protein 3-like 2B (204 aa).

The segment covering 126–137 (SLDRAGAERVRS) has biased composition (basic and acidic residues). The tract at residues 126-145 (SLDRAGAERVRSPLEPTPGR) is disordered.

The protein belongs to the MBD3L family.

This is Methyl-CpG-binding domain protein 3-like 2B from Homo sapiens (Human).